The chain runs to 369 residues: Phospho-N-acetylmuramoyl-pentapeptide-transferase (369 aa).

A run of 10 helical transmembrane segments spans residues 30–50 (LAIFTAQFVVVAMGSRFIRWM), 74–94 (GTPTMGGVMILAGLLVGTLLW), 97–117 (LSNPYVWAVVLVTAGYGLLGF), 136–156 (IRLALEAFIAMAAVLIIIVFA), 177–197 (YFVDLSWGYLLFGAFIIVGAA), 208–228 (GLATVPVMIAAAAYGLIAYLV), 244–264 (GVGEIAVFCGALIGSGLGFLW), 272–292 (IFMGDTGSLALGGAVGAVAVA), 297–317 (IVLAIIGGLFVAETLSVIIQV), and 346–366 (TVVIRFWIVAIMLALVGLATL).

It belongs to the glycosyltransferase 4 family. MraY subfamily. It depends on Mg(2+) as a cofactor.

It is found in the cell inner membrane. The enzyme catalyses UDP-N-acetyl-alpha-D-muramoyl-L-alanyl-gamma-D-glutamyl-meso-2,6-diaminopimeloyl-D-alanyl-D-alanine + di-trans,octa-cis-undecaprenyl phosphate = di-trans,octa-cis-undecaprenyl diphospho-N-acetyl-alpha-D-muramoyl-L-alanyl-D-glutamyl-meso-2,6-diaminopimeloyl-D-alanyl-D-alanine + UMP. Its pathway is cell wall biogenesis; peptidoglycan biosynthesis. Functionally, catalyzes the initial step of the lipid cycle reactions in the biosynthesis of the cell wall peptidoglycan: transfers peptidoglycan precursor phospho-MurNAc-pentapeptide from UDP-MurNAc-pentapeptide onto the lipid carrier undecaprenyl phosphate, yielding undecaprenyl-pyrophosphoryl-MurNAc-pentapeptide, known as lipid I. The polypeptide is Phospho-N-acetylmuramoyl-pentapeptide-transferase (Phenylobacterium zucineum (strain HLK1)).